The chain runs to 218 residues: Ras-related protein RABA1i (218 aa).

20-27 (GDSGVGKS) serves as a coordination point for GTP. The short motif at 42-50 (SRATIGVEF) is the Effector region element. GTP contacts are provided by residues 68–72 (DTAGQ), 126–129 (NKAD), and 156–157 (SA). 2 S-geranylgeranyl cysteine lipidation sites follow: Cys215 and Cys216.

It belongs to the small GTPase superfamily. Rab family.

The protein localises to the cell membrane. Its function is as follows. Intracellular vesicle trafficking and protein transport. The chain is Ras-related protein RABA1i (RABA1I) from Arabidopsis thaliana (Mouse-ear cress).